The chain runs to 156 residues: Phosphopantetheine adenylyltransferase (156 aa).

Position 9 (Ser9) interacts with substrate. Residues 9-10 and His17 each bind ATP; that span reads SF. Lys41, Ile74, and Lys88 together coordinate substrate. ATP-binding positions include 89 to 91, Glu99, and 123 to 129; these read GLR and LLHVSSS.

This sequence belongs to the bacterial CoaD family. As to quaternary structure, homohexamer. The cofactor is Mg(2+).

The protein resides in the cytoplasm. It carries out the reaction (R)-4'-phosphopantetheine + ATP + H(+) = 3'-dephospho-CoA + diphosphate. It participates in cofactor biosynthesis; coenzyme A biosynthesis; CoA from (R)-pantothenate: step 4/5. Reversibly transfers an adenylyl group from ATP to 4'-phosphopantetheine, yielding dephospho-CoA (dPCoA) and pyrophosphate. The sequence is that of Phosphopantetheine adenylyltransferase from Kocuria rhizophila (strain ATCC 9341 / DSM 348 / NBRC 103217 / DC2201).